We begin with the raw amino-acid sequence, 63 residues long: MVQRCALVVLLVVAVAAALCSAQLNFTPNWGTGKRDAADFADPYSFLYRLIQAEARKMSGCSN.

An N-terminal signal peptide occupies residues 1-22; that stretch reads MVQRCALVVLLVVAVAAALCSA. Glutamine 23 is modified (pyrrolidone carboxylic acid). Threonine 32 is subject to Threonine amide.

The protein belongs to the AKH/HRTH/RPCH family.

Its subcellular location is the secreted. In terms of biological role, this hormone, released from cells in the corpora cardiaca, causes release of diglycerides from the fat body and stimulation of muscles to use these diglycerides as an energy source during energy-demanding processes. The chain is Adipokinetic prohormone type 1 from Locusta migratoria (Migratory locust).